Here is a 196-residue protein sequence, read N- to C-terminus: Ribonuclease HII (196 aa).

Positions 1–196 constitute an RNase H type-2 domain; that stretch reads MVTIGVDEAG…FAPVAQLQLL (196 aa). Residues Asp7, Glu8, and Asp103 each contribute to the a divalent metal cation site.

Belongs to the RNase HII family. The cofactor is Mn(2+). Mg(2+) is required as a cofactor.

It is found in the cytoplasm. It catalyses the reaction Endonucleolytic cleavage to 5'-phosphomonoester.. In terms of biological role, endonuclease that specifically degrades the RNA of RNA-DNA hybrids. The polypeptide is Ribonuclease HII (Novosphingobium aromaticivorans (strain ATCC 700278 / DSM 12444 / CCUG 56034 / CIP 105152 / NBRC 16084 / F199)).